Here is a 310-residue protein sequence, read N- to C-terminus: UDP-N-acetylenolpyruvoylglucosamine reductase (310 aa).

Positions Arg-34–Ser-213 constitute an FAD-binding PCMH-type domain. Arg-178 is an active-site residue. Ser-227 serves as the catalytic Proton donor. Residue Glu-297 is part of the active site.

This sequence belongs to the MurB family. FAD is required as a cofactor.

Its subcellular location is the cytoplasm. It carries out the reaction UDP-N-acetyl-alpha-D-muramate + NADP(+) = UDP-N-acetyl-3-O-(1-carboxyvinyl)-alpha-D-glucosamine + NADPH + H(+). It participates in cell wall biogenesis; peptidoglycan biosynthesis. Its function is as follows. Cell wall formation. The protein is UDP-N-acetylenolpyruvoylglucosamine reductase of Parvibaculum lavamentivorans (strain DS-1 / DSM 13023 / NCIMB 13966).